Here is a 771-residue protein sequence, read N- to C-terminus: Probable cation-transporting ATPase G (771 aa).

In terms of domain architecture, HMA spans 19-86; the sequence is GRMRVQATGF…AIIDAETVPA (68 aa). Residues 72-92 form a helical membrane-spanning segment; it reads AAILSAIIDAETVPAAAVPAY. The segment at 122–143 is disordered; the sequence is DVAAQPSGETSDACCDGEDNED. 5 consecutive transmembrane segments (helical) span residues 163-183, 209-229, 330-350, 387-407, and 411-431; these read VLLT…VVLG, VGVG…GELG, VFAG…ATAA, MIAA…LVWI, and LVVL…VTVV. Residue Asp462 is the 4-aspartylphosphate intermediate of the active site. Residues Asp651 and Asp655 each coordinate Mg(2+). The next 2 helical transmembrane spans lie at 657 to 677 and 716 to 736; these read PALA…DVAI and IITV…AVVL.

Belongs to the cation transport ATPase (P-type) (TC 3.A.3) family. Type IB subfamily.

It is found in the cell membrane. The catalysed reaction is ATP + H2O = ADP + phosphate + H(+). This is Probable cation-transporting ATPase G (ctpG) from Mycobacterium bovis (strain ATCC BAA-935 / AF2122/97).